The sequence spans 317 residues: Melanocyte-stimulating hormone receptor (317 aa).

The Extracellular segment spans residues 1–37 (MPVQGSQRRLLGSLNSTPTATPHLGLAANQTGAWCLE). N-linked (GlcNAc...) asparagine glycosylation is present at asparagine 29. The helical transmembrane segment at 38 to 63 (VSIPDGLFLSLGLVSLVENVLVVTAI) threads the bilayer. The Cytoplasmic portion of the chain corresponds to 64-72 (AKNRNLHSP). Residues 73 to 93 (MYCFICCLALSDLLVSGSNML) traverse the membrane as a helical segment. Residues 94–118 (ETAVTLLLEAGALAARAAVVQQLDN) lie on the Extracellular side of the membrane. A helical transmembrane segment spans residues 119–140 (VIDVITCSSMLSSLCFLGAIAV). At 141–163 (DRYISIFYALRYHSIVTLPRARR) the chain is on the cytoplasmic side. The chain crosses the membrane as a helical span at residues 164 to 183 (AVAAIWVASVLFSMLFIAYY). At 184-191 (DHAAVLLC) the chain is on the extracellular side. Residues 192 to 211 (LVVFFLAMLVLMAVLYVHML) traverse the membrane as a helical segment. Over 212 to 240 (ARACQHAQGIARLHKRQRPAHQGFGLKGA) the chain is Cytoplasmic. The chain crosses the membrane as a helical span at residues 241–266 (ATLTILLGIFFLCWGPFFLHLTLIVL). Over 267–279 (CPQHPTCSCIFKN) the chain is Extracellular. A helical membrane pass occupies residues 280–300 (FNLFLALIICNAIIDPLIYAF). At 301–317 (RSQELRRTLKEVLLCSW) the chain is on the cytoplasmic side. The S-palmitoyl cysteine moiety is linked to residue cysteine 315.

Belongs to the G-protein coupled receptor 1 family. As to quaternary structure, interacts with MGRN1, but does not undergo MGRN1-mediated ubiquitination; this interaction competes with GNAS-binding and thus inhibits agonist-induced cAMP production. Interacts with OPN3; the interaction results in a decrease in MC1R-mediated cAMP signaling and ultimately a decrease in melanin production in melanocytes.

The protein resides in the cell membrane. Functionally, receptor for MSH (alpha, beta and gamma) and ACTH. The activity of this receptor is mediated by G proteins which activate adenylate cyclase. Mediates melanogenesis, the production of eumelanin (black/brown) and phaeomelanin (red/yellow), via regulation of cAMP signaling in melanocytes. In Allenopithecus nigroviridis (Allen's swamp monkey), this protein is Melanocyte-stimulating hormone receptor (MC1R).